We begin with the raw amino-acid sequence, 685 residues long: Serotransferrin (685 aa).

Residues Met-1 to Ile-16 form the signal peptide. 2 consecutive Transferrin-like domains span residues Val-23 to Ile-329 and Met-340 to Thr-666. Residues Cys-26 and Cys-48 are joined by a disulfide bond. Positions 72 and 102 each coordinate Fe(3+). Disulfide bonds link Cys-125/Cys-206, Cys-170/Cys-184, and Cys-234/Cys-248. Residues Thr-127, Lys-131, Ala-133, and Gly-134 each contribute to the hydrogencarbonate site. Tyr-200 is a binding site for Fe(3+). His-256 serves as a coordination point for Fe(3+). 2 disulfides stabilise this stretch: Cys-343–Cys-379 and Cys-353–Cys-370. The Fe(3+) site is built by Asp-394 and Tyr-428. 7 disulfide bridges follow: Cys-404-Cys-678, Cys-419-Cys-639, Cys-451-Cys-526, Cys-475-Cys-667, Cys-485-Cys-499, Cys-496-Cys-509, and Cys-566-Cys-580. Hydrogencarbonate contacts are provided by Thr-453, Arg-457, Ala-459, and Gly-460. Asn-476 carries an N-linked (GlcNAc...) asparagine glycan. A Fe(3+)-binding site is contributed by Tyr-520. His-588 provides a ligand contact to Fe(3+).

This sequence belongs to the transferrin family. Monomer.

The protein resides in the secreted. In terms of biological role, transferrins are iron binding transport proteins which can bind two Fe(3+) ions in association with the binding of an anion, usually bicarbonate. This Paralichthys olivaceus (Bastard halibut) protein is Serotransferrin (tf).